The chain runs to 203 residues: uncharacterized protein (203 aa).

Residues C89 to L109 form a helical membrane-spanning segment.

Its subcellular location is the membrane. This is an uncharacterized protein from Saccharomyces cerevisiae (strain ATCC 204508 / S288c) (Baker's yeast).